A 25-amino-acid polypeptide reads, in one-letter code: Caerin-2.3 (25 aa).

As to expression, expressed by the skin parotoid and/or rostral glands.

Its subcellular location is the secreted. Functionally, acts as a male sex pheromone that attracts females. Has no antimicrobial activity. The polypeptide is Caerin-2.3 (Ranoidea caerulea (Green tree frog)).